The following is a 300-amino-acid chain: tRNA dimethylallyltransferase (300 aa).

11–18 serves as a coordination point for ATP; that stretch reads GPTAVGKS. 13-18 serves as a coordination point for substrate; that stretch reads TAVGKS. An interaction with substrate tRNA region spans residues 35-38; the sequence is DSIQ.

It belongs to the IPP transferase family. In terms of assembly, monomer. Requires Mg(2+) as cofactor.

It carries out the reaction adenosine(37) in tRNA + dimethylallyl diphosphate = N(6)-dimethylallyladenosine(37) in tRNA + diphosphate. Functionally, catalyzes the transfer of a dimethylallyl group onto the adenine at position 37 in tRNAs that read codons beginning with uridine, leading to the formation of N6-(dimethylallyl)adenosine (i(6)A). The protein is tRNA dimethylallyltransferase of Borrelia recurrentis (strain A1).